A 599-amino-acid chain; its full sequence is Elongation factor 4 (599 aa).

The tr-type G domain occupies 2–184 (KNIRNFSIIA…RLVRDIPPPQ (183 aa)). Residues 14-19 (DHGKST) and 131-134 (NKID) contribute to the GTP site.

This sequence belongs to the TRAFAC class translation factor GTPase superfamily. Classic translation factor GTPase family. LepA subfamily.

It localises to the cell inner membrane. The catalysed reaction is GTP + H2O = GDP + phosphate + H(+). Functionally, required for accurate and efficient protein synthesis under certain stress conditions. May act as a fidelity factor of the translation reaction, by catalyzing a one-codon backward translocation of tRNAs on improperly translocated ribosomes. Back-translocation proceeds from a post-translocation (POST) complex to a pre-translocation (PRE) complex, thus giving elongation factor G a second chance to translocate the tRNAs correctly. Binds to ribosomes in a GTP-dependent manner. In Salmonella arizonae (strain ATCC BAA-731 / CDC346-86 / RSK2980), this protein is Elongation factor 4.